A 137-amino-acid chain; its full sequence is Large ribosomal subunit protein eL32 (137 aa).

The interval proline 95–serine 137 is disordered. Positions arginine 123–serine 137 are enriched in basic residues.

The protein belongs to the eukaryotic ribosomal protein eL32 family.

In Trichoderma harzianum (Hypocrea lixii), this protein is Large ribosomal subunit protein eL32 (rpl32).